Consider the following 147-residue polypeptide: MFNMNINSPVRFVKETNRAKSPTRQSPGAAGYDLYSAYDYTIPPGERQLIKTDISMSMPKICYGRIAPRSGLSLKGIDIGGGVIDEDYRGNIGVILINNGKCTFNVNTGDRIAQLIYQRIYYPELEEVQSLDSTNRGDQGFGSTGLR.

Mg(2+) is bound at residue R24. Residues 68–70 (PRS), 82–85 (GVID), Y88, G93, I95, and R111 each bind dUTP.

This sequence belongs to the dUTPase family.

The catalysed reaction is dUTP + H2O = dUMP + diphosphate + H(+). In terms of biological role, this enzyme is involved in nucleotide metabolism: it produces dUMP, the immediate precursor of thymidine nucleotides and it decreases the intracellular concentration of dUTP so that uracil cannot be incorporated into DNA. This is Deoxyuridine 5'-triphosphate nucleotidohydrolase (OPG046) from Homo sapiens (Human).